We begin with the raw amino-acid sequence, 904 residues long: Alanine--tRNA ligase (904 aa).

Zn(2+) is bound by residues histidine 594, histidine 598, cysteine 695, and histidine 699.

This sequence belongs to the class-II aminoacyl-tRNA synthetase family. The cofactor is Zn(2+).

It is found in the cytoplasm. The catalysed reaction is tRNA(Ala) + L-alanine + ATP = L-alanyl-tRNA(Ala) + AMP + diphosphate. Its function is as follows. Catalyzes the attachment of alanine to tRNA(Ala) in a two-step reaction: alanine is first activated by ATP to form Ala-AMP and then transferred to the acceptor end of tRNA(Ala). Also edits incorrectly charged Ser-tRNA(Ala) and Gly-tRNA(Ala) via its editing domain. The chain is Alanine--tRNA ligase from Anaeromyxobacter sp. (strain Fw109-5).